The sequence spans 26 residues: Acyl carrier protein (26 aa).

The Carrier domain maps to 2–26 (SDIEQRIKQAVAEQLGMRAEEIKNE).

Belongs to the acyl carrier protein (ACP) family. In terms of processing, 4'-phosphopantetheine is transferred from CoA to a specific serine of apo-ACP by AcpS. This modification is essential for activity because fatty acids are bound in thioester linkage to the sulfhydryl of the prosthetic group.

It localises to the cytoplasm. The protein operates within lipid metabolism; fatty acid biosynthesis. In terms of biological role, carrier of the growing fatty acid chain in fatty acid biosynthesis. The polypeptide is Acyl carrier protein (acpP) (Acinetobacter calcoaceticus).